The following is a 158-amino-acid chain: Snaclec crotocetin-1 (158 aa).

The signal sequence occupies residues M1–A23. Intrachain disulfides connect C27/C38, C55/C152, and C127/C144. A C-type lectin domain is found at Y34 to K153.

This sequence belongs to the snaclec family. Heterodimer; disulfide-linked. As to expression, expressed by the venom gland.

It localises to the secreted. In terms of biological role, interferes with one step of hemostasis (modulation of platelet aggregation, or coagulation cascade, for example). The sequence is that of Snaclec crotocetin-1 from Crotalus durissus terrificus (South American rattlesnake).